A 1637-amino-acid chain; its full sequence is Surface protein (1637 aa).

The signal sequence occupies residues M1–A48. 3 disordered regions span residues A49 to V305, V689 to T719, and P739 to L1611. Over residues K56–K65 the composition is skewed to basic and acidic residues. The span at N69 to S83 shows a compositional bias: polar residues. Composition is skewed to basic and acidic residues over residues D90–N106, E127–T180, and E188–T264. Polar residues predominate over residues A289–S298. G5 domains lie at Q654 to E737, H783 to E865, H911 to E993, H1039 to E1121, and H1167 to I1250. The segment covering D779–T817 has biased composition (basic and acidic residues). Over residues Q818–T832 the composition is skewed to low complexity. Positions D907–T945 are enriched in basic and acidic residues. The segment covering Q946–T960 has biased composition (low complexity). Residues D1035 to T1073 show a composition bias toward basic and acidic residues. Over residues Q1074–T1088 the composition is skewed to low complexity. Residues D1163–L1189 are compositionally biased toward basic and acidic residues. Composition is skewed to acidic residues over residues T1282 to D1291 and S1302 to S1580. 141 tandem repeats follow at residues D1301–S1302, D1303–A1304, D1305–S1306, D1307–S1308, D1309–A1310, D1311–S1312, D1313–S1314, D1315–A1316, D1317–S1318, D1319–S1320, D1321–A1322, D1323–S1324, D1325–S1326, D1327–A1328, D1329–S1330, D1331–S1332, D1333–S1334, D1335–S1336, D1337–S1338, D1339–S1340, D1341–S1342, D1343–S1344, D1345–A1346, D1347–S1348, D1349–S1350, D1351–S1352, D1353–S1354, D1355–S1356, D1357–A1358, D1359–S1360, D1361–S1362, D1363–A1364, D1365–S1366, D1367–S1368, D1369–A1370, D1371–S1372, D1373–S1374, D1375–S1376, D1377–A1378, D1379–S1380, D1381–S1382, D1383–S1384, D1385–A1386, D1387–S1388, D1389–S1390, D1391–S1392, D1393–S1394, D1395–S1396, D1397–A1398, D1399–S1400, D1401–S1402, D1403–S1404, D1405–S1406, D1407–S1408, D1409–A1410, D1411–S1412, D1413–S1414, D1415–A1416, D1417–S1418, D1419–S1420, D1421–S1422, D1423–S1424, D1425–S1426, D1427–A1428, D1429–S1430, D1431–S1432, D1433–S1434, D1435–S1436, D1437–S1438, D1439–A1440, D1441–S1442, D1443–S1444, D1445–A1446, D1447–S1448, D1449–S1450, D1451–A1452, D1453–S1454, D1455–S1456, D1457–A1458, D1459–S1460, D1461–S1462, D1463–S1464, D1465–S1466, D1467–S1468, D1469–A1470, D1471–S1472, D1473–S1474, D1475–A1476, D1477–S1478, D1479–S1480, D1481–A1482, D1483–S1484, D1485–S1486, D1487–A1488, D1489–S1490, D1491–S1492, D1493–S1494, D1495–S1496, D1497–S1498, D1499–A1500, D1501–S1502, D1503–S1504, D1505–S1506, D1507–S1508, D1509–S1510, D1511–S1512, D1513–A1514, D1515–S1516, D1517–S1518, D1519–A1520, D1521–S1522, D1523–S1524, D1525–S1526, D1527–A1528, D1529–S1530, D1531–S1532, D1533–A1534, D1535–S1536, D1537–S1538, D1539–A1540, D1541–G1542, D1543–S1544, D1545–A1546, D1547–S1548, D1549–S1550, D1551–A1552, D1553–S1554, D1555–S1556, D1557–S1558, D1559–S1560, D1561–S1562, D1563–S1564, D1565–S1566, D1567–S1568, D1569–A1570, D1571–S1572, D1573–S1574, D1575–S1576, D1577–S1578, D1579–S1580, and D1581–A1582. Residues D1301–A1582 are 141 X 2 AA tandem repeats of D-[SAG]. Over residues D1581–P1599 the composition is skewed to basic and acidic residues. An LPXTG sorting signal motif is present at residues L1598–G1602. Pentaglycyl murein peptidoglycan amidated threonine is present on T1601. Residues G1602–K1637 constitute a propeptide, removed by sortase.

It is found in the secreted. The protein localises to the cell wall. Its function is as follows. Could have a role in preventing adhesion at some stages during an infection. This is Surface protein (pls) from Staphylococcus aureus.